The chain runs to 421 residues: Core protease I7 homolog (421 aa).

Residues His-242, Asp-249, and Cys-329 contribute to the active site.

It belongs to the peptidase C57 family.

The protein localises to the virion. Its function is as follows. Late protein responsible for processing most or all of the viral core and membrane proteins known to undergo morphogenesis-associated proteolysis. These proteolytic events are involved in the transformation of immature virions (IV) into mature virions (MV). The chain is Core protease I7 homolog from Fowlpox virus (strain NVSL) (FPV).